Here is an 866-residue protein sequence, read N- to C-terminus: Probable LRR receptor-like serine/threonine-protein kinase At5g16900 (866 aa).

Residues 1-20 form the signal peptide; sequence MEDRHRYLFFIFAIIHYVQA. Topologically, residues 21–515 are extracellular; sequence QQGFISLDCG…SSSGNKETTV (495 aa). 8 N-linked (GlcNAc...) asparagine glycosylation sites follow: asparagine 137, asparagine 176, asparagine 230, asparagine 251, asparagine 331, asparagine 404, asparagine 409, and asparagine 436. LRR repeat units follow at residues 415–438, 439–461, and 463–485; these read RIIS…QNLT, QLQK…LANM, and SLLF…LLDR. Residues asparagine 468 and asparagine 505 are each glycosylated (N-linked (GlcNAc...) asparagine). A helical transmembrane segment spans residues 516–536; that stretch reads IAPVAAAIAIFIAVLVLIIVF. Residues 537–866 lie on the Cytoplasmic side of the membrane; it reads IKKRPSSIRA…LNQVIDSKSS (330 aa). A Phosphothreonine modification is found at threonine 564. The region spanning 573-846 is the Protein kinase domain; it reads NNFERVIGEG…HVVQELKQCI (274 aa). ATP is bound by residues 579–587 and lysine 601; that span reads IGEGGFGVV. Position 646 is a phosphotyrosine (tyrosine 646). Catalysis depends on aspartate 698, which acts as the Proton acceptor. Position 732 is a phosphoserine (serine 732). 2 positions are modified to phosphothreonine: threonine 733 and threonine 738. The residue at position 746 (tyrosine 746) is a Phosphotyrosine.

Belongs to the protein kinase superfamily. Ser/Thr protein kinase family.

The protein resides in the membrane. The catalysed reaction is L-seryl-[protein] + ATP = O-phospho-L-seryl-[protein] + ADP + H(+). It carries out the reaction L-threonyl-[protein] + ATP = O-phospho-L-threonyl-[protein] + ADP + H(+). This chain is Probable LRR receptor-like serine/threonine-protein kinase At5g16900, found in Arabidopsis thaliana (Mouse-ear cress).